A 374-amino-acid polypeptide reads, in one-letter code: Anthranilate O-methyltransferase 2 (374 aa).

Position 18 (Tyr18) interacts with S-adenosyl-L-homocysteine. Anthranilate is bound at residue Gln25. Residues Cys59, Asn64, Asp98, Leu99, Ser142, and Tyr143 each coordinate S-adenosyl-L-homocysteine. Residue Trp164 coordinates anthranilate. 2 residues coordinate Mg(2+): Glu261 and Phe263.

It belongs to the methyltransferase superfamily. Type-7 methyltransferase family. SABATH subfamily.

The enzyme catalyses anthranilate + S-adenosyl-L-methionine = O-methyl anthranilate + S-adenosyl-L-homocysteine. Functionally, methyltransferase involved in the biosynthesis of methyl anthranilate in response to stresses. Utilizes anthranilic acid as substrate. Produces exclusively the O-methyl ester. The sequence is that of Anthranilate O-methyltransferase 2 (AAMT2) from Zea mays (Maize).